A 436-amino-acid chain; its full sequence is GTPase Der (436 aa).

EngA-type G domains are found at residues 4-167 (PVVA…PKDA) and 175-351 (IKFS…DNHE). Residues 10-17 (GRPNVGKS), 57-61 (DTGGI), 119-122 (NKVD), 181-188 (GRPNVGKS), 229-233 (DTAGI), and 294-297 (NKWD) contribute to the GTP site. Residues 352–436 (QRISSAVLND…PIHIIERRRK (85 aa)) enclose the KH-like domain.

This sequence belongs to the TRAFAC class TrmE-Era-EngA-EngB-Septin-like GTPase superfamily. EngA (Der) GTPase family. As to quaternary structure, associates with the 50S ribosomal subunit.

Functionally, GTPase that plays an essential role in the late steps of ribosome biogenesis. The polypeptide is GTPase Der (Ligilactobacillus salivarius (strain UCC118) (Lactobacillus salivarius)).